Reading from the N-terminus, the 177-residue chain is Large ribosomal subunit protein eL20 (177 aa).

It belongs to the eukaryotic ribosomal protein eL20 family.

The protein is Large ribosomal subunit protein eL20 (RpL18A) of Spodoptera frugiperda (Fall armyworm).